We begin with the raw amino-acid sequence, 504 residues long: Ribose import ATP-binding protein RbsA (504 aa).

2 consecutive ABC transporter domains span residues 6 to 242 and 250 to 495; these read LELN…VGRR and IDVQ…VGKT. Position 38–45 (38–45) interacts with ATP; sequence GENGAGKS.

The protein belongs to the ABC transporter superfamily. Ribose importer (TC 3.A.1.2.1) family. As to quaternary structure, the complex is composed of an ATP-binding protein (RbsA), two transmembrane proteins (RbsC) and a solute-binding protein (RbsB).

It is found in the cell inner membrane. The enzyme catalyses D-ribose(out) + ATP + H2O = D-ribose(in) + ADP + phosphate + H(+). In terms of biological role, part of the ABC transporter complex RbsABC involved in ribose import. Responsible for energy coupling to the transport system. This chain is Ribose import ATP-binding protein RbsA, found in Aliivibrio fischeri (strain ATCC 700601 / ES114) (Vibrio fischeri).